Here is an 88-residue protein sequence, read N- to C-terminus: UPF0297 protein SGO_2042 (88 aa).

It belongs to the UPF0297 family.

The chain is UPF0297 protein SGO_2042 from Streptococcus gordonii (strain Challis / ATCC 35105 / BCRC 15272 / CH1 / DL1 / V288).